Consider the following 213-residue polypeptide: Dephospho-CoA kinase (213 aa).

Positions 3–202 (RIGLTGGIGS…QSYLALADKH (200 aa)) constitute a DPCK domain. 11–16 (GSGKTR) contributes to the ATP binding site.

The protein belongs to the CoaE family.

Its subcellular location is the cytoplasm. The enzyme catalyses 3'-dephospho-CoA + ATP = ADP + CoA + H(+). It functions in the pathway cofactor biosynthesis; coenzyme A biosynthesis; CoA from (R)-pantothenate: step 5/5. Catalyzes the phosphorylation of the 3'-hydroxyl group of dephosphocoenzyme A to form coenzyme A. This Bordetella avium (strain 197N) protein is Dephospho-CoA kinase.